Here is a 146-residue protein sequence, read N- to C-terminus: MHLLLLNGPNLNLLGQREPGIYGSGTLASIEDGLRQEATAAGAVLECFQSNFEGALVERIHQAIGASQGILINAGAFTHTSIALRDALLGVAIPYVELHLSNTHAREPFRHRSYLADRAVGVVSGFGAMSYSLALQGLIDHLRQNG.

Tyr-22 acts as the Proton acceptor in catalysis. Positions 73, 79, and 86 each coordinate substrate. His-99 serves as the catalytic Proton donor. Residues 100-101 (LS) and Arg-110 each bind substrate.

The protein belongs to the type-II 3-dehydroquinase family. Homododecamer.

It carries out the reaction 3-dehydroquinate = 3-dehydroshikimate + H2O. It functions in the pathway metabolic intermediate biosynthesis; chorismate biosynthesis; chorismate from D-erythrose 4-phosphate and phosphoenolpyruvate: step 3/7. Its function is as follows. Catalyzes a trans-dehydration via an enolate intermediate. The sequence is that of 3-dehydroquinate dehydratase from Parasynechococcus marenigrum (strain WH8102).